The chain runs to 217 residues: ATP phosphoribosyltransferase (217 aa).

It belongs to the ATP phosphoribosyltransferase family. Short subfamily. Heteromultimer composed of HisG and HisZ subunits.

The protein resides in the cytoplasm. The enzyme catalyses 1-(5-phospho-beta-D-ribosyl)-ATP + diphosphate = 5-phospho-alpha-D-ribose 1-diphosphate + ATP. The protein operates within amino-acid biosynthesis; L-histidine biosynthesis; L-histidine from 5-phospho-alpha-D-ribose 1-diphosphate: step 1/9. In terms of biological role, catalyzes the condensation of ATP and 5-phosphoribose 1-diphosphate to form N'-(5'-phosphoribosyl)-ATP (PR-ATP). Has a crucial role in the pathway because the rate of histidine biosynthesis seems to be controlled primarily by regulation of HisG enzymatic activity. The protein is ATP phosphoribosyltransferase of Burkholderia ambifaria (strain MC40-6).